Here is a 222-residue protein sequence, read N- to C-terminus: Uridine diphosphate glucose pyrophosphatase NUDT14 (222 aa).

The Nudix hydrolase domain occupies 38 to 206; it reads KTHDSVTVLL…DIPKTLGVIF (169 aa). Positions 111-129 match the Nudix box motif; sequence PGLSLEEVACKEAWEECGY.

This sequence belongs to the Nudix hydrolase family. Homodimer. Mg(2+) serves as cofactor.

Its subcellular location is the cytoplasm. It catalyses the reaction UDP-sugar + H2O = UMP + alpha-D-aldose 1-phosphate.. Hydrolyzes UDP-glucose to glucose 1-phosphate and UMP and ADP-ribose to ribose 5-phosphate and AMP. The physiological substrate is probably UDP-glucose. Poor activity on other substrates such as ADP-glucose, CDP-glucose, GDP-glucose and GDP-mannose. The sequence is that of Uridine diphosphate glucose pyrophosphatase NUDT14 (NUDT14) from Homo sapiens (Human).